Consider the following 146-residue polypeptide: Large ribosomal subunit protein uL15 (146 aa).

Residues 1-54 (MKLHELQPAAGSRKAPKRVGRGTGSGLGRNAGKGEKGQNARSGGGVRPGFEGGQ) form a disordered region. 2 stretches are compositionally biased toward gly residues: residues 21–31 (RGTGSGLGRNA) and 42–52 (SGGGVRPGFEG).

It belongs to the universal ribosomal protein uL15 family. In terms of assembly, part of the 50S ribosomal subunit.

Its function is as follows. Binds to the 23S rRNA. The chain is Large ribosomal subunit protein uL15 from Clostridium botulinum (strain Eklund 17B / Type B).